The primary structure comprises 264 residues: General transcription factor IIF subunit 2 (264 aa).

Belongs to the TFIIF beta subunit family. As to quaternary structure, heterodimer of an alpha and a beta subunit.

The protein resides in the nucleus. Its function is as follows. TFIIF is a general transcription initiation factor that binds to RNA polymerase II and helps to recruit it to the initiation complex in collaboration with TFIIB. This is General transcription factor IIF subunit 2 (gtf2f2) from Xenopus laevis (African clawed frog).